Here is a 203-residue protein sequence, read N- to C-terminus: Guanylate kinase (203 aa).

The region spanning 5–183 (GVLYILSAPS…AVEELKSVII (179 aa)) is the Guanylate kinase-like domain. 12–19 (APSGAGKT) provides a ligand contact to ATP.

The protein belongs to the guanylate kinase family.

It localises to the cytoplasm. It catalyses the reaction GMP + ATP = GDP + ADP. In terms of biological role, essential for recycling GMP and indirectly, cGMP. The chain is Guanylate kinase from Geobacter sulfurreducens (strain ATCC 51573 / DSM 12127 / PCA).